A 740-amino-acid polypeptide reads, in one-letter code: 1,4-alpha-glucan branching enzyme GlgB (740 aa).

D409 serves as the catalytic Nucleophile. E462 functions as the Proton donor in the catalytic mechanism.

Belongs to the glycosyl hydrolase 13 family. GlgB subfamily. As to quaternary structure, monomer.

The enzyme catalyses Transfers a segment of a (1-&gt;4)-alpha-D-glucan chain to a primary hydroxy group in a similar glucan chain.. The protein operates within glycan biosynthesis; glycogen biosynthesis. Catalyzes the formation of the alpha-1,6-glucosidic linkages in glycogen by scission of a 1,4-alpha-linked oligosaccharide from growing alpha-1,4-glucan chains and the subsequent attachment of the oligosaccharide to the alpha-1,6 position. The polypeptide is 1,4-alpha-glucan branching enzyme GlgB (Methylococcus capsulatus (strain ATCC 33009 / NCIMB 11132 / Bath)).